Reading from the N-terminus, the 286-residue chain is P2R1A-PPP2R2A-interacting phosphatase regulator 1 (286 aa).

The interval 1-46 (MAQEKMELDLELPAGTGASPAEGGGPGSGGLRRSNSAPLIHGLSDS) is disordered. A Phosphoserine modification is found at S34. S36 bears the Phosphoserine; by CHEK1 mark. Residues S44, S47, S61, and S75 each carry the phosphoserine modification. Residue K88 forms a Glycyl lysine isopeptide (Lys-Gly) (interchain with G-Cter in SUMO1) linkage. Residues S142 and S146 each carry the phosphoserine modification. The residue at position 148 (T148) is a Phosphothreonine. The segment at 166–187 (SNGLPPSPIPSPTTRFTTRRSQ) is disordered. The span at 177–187 (PTTRFTTRRSQ) shows a compositional bias: low complexity. Phosphoserine is present on residues S186 and S188. The tract at residues 238 to 286 (VSSDTLDGNSSSAGSSCNSPAKVSTTTDSPVSPAQAASPFIPVDELSSK) is disordered. Residues 245 to 256 (GNSSSAGSSCNS) are compositionally biased toward low complexity. Residues 258–269 (AKVSTTTDSPVS) are compositionally biased toward polar residues. A phosphoserine mark is found at S266, S269, and S275.

The protein belongs to the FAM122 family. Interacts with PPP2CA and PPP2R1A. Interacts (via its N-terminus) with PPP2R2A; the interaction is direct and this interaction inhibits PP2A activity. The CHEK1-mediated Ser-36 phosphorylated form interacts with 14-3-3 proteins. CHEK1-mediated phosphorylation at Ser-36 negatively regulates its ability to inhibit serine/threonine-protein phosphatase 2A (PP2A) activity. Phosphorylation leads to its release from the PP2A complex and its sequestration by 14-3-3 proteins in the cytoplasm resulting in its inability to translocate to the nucleus, where it otherwise inhibits PP2A.

The protein resides in the nucleus. It is found in the cytoplasm. In terms of biological role, acts as an inhibitor of serine/threonine-protein phosphatase 2A (PP2A) activity. Inhibits PP2A activity by blocking the substrate binding site on PPP2R2A and the active site of PPP2CA. Potentiates ubiquitin-mediated proteasomal degradation of serine/threonine-protein phosphatase 2A catalytic subunit alpha (PPP2CA). Inhibits PP2A-mediated dephosphorylation of WEE1, promoting ubiquitin-mediated proteolysis of WEE1, thereby releasing G2/M checkpoint. The sequence is that of P2R1A-PPP2R2A-interacting phosphatase regulator 1 from Rattus norvegicus (Rat).